We begin with the raw amino-acid sequence, 295 residues long: Pyrroline-5-carboxylate reductase (295 aa).

It belongs to the pyrroline-5-carboxylate reductase family.

The protein localises to the cytoplasm. It carries out the reaction L-proline + NADP(+) = (S)-1-pyrroline-5-carboxylate + NADPH + 2 H(+). The catalysed reaction is L-proline + NAD(+) = (S)-1-pyrroline-5-carboxylate + NADH + 2 H(+). Its pathway is amino-acid biosynthesis; L-proline biosynthesis; L-proline from L-glutamate 5-semialdehyde: step 1/1. Its function is as follows. Catalyzes the reduction of 1-pyrroline-5-carboxylate (PCA) to L-proline. This chain is Pyrroline-5-carboxylate reductase, found in Mycobacterium tuberculosis (strain CDC 1551 / Oshkosh).